The sequence spans 55 residues: Lantibiotic epilancin 15X (55 aa).

Residues 1–24 (MKKELFDLNLNKDIEAQKSDLNPQ) constitute a propeptide, cleaved by ElxP. Serine 25 is modified (D-lactate; by the dehydratase ElxB and the dehydrogenase ElxO). Serine 27 is subject to 2,3-didehydroalanine (Ser); by the dehydratase ElxB. Threonine 31 and threonine 32 each carry 2,3-didehydrobutyrine; by the dehydratase ElxB. A cross-link (lanthionine (Ser-Cys); by the dehydratase ElxB and the cyclase ElxC) is located at residues 36–40 (SKKLC). 2 consecutive cross-links (beta-methyllanthionine (Thr-Cys); by the dehydratase ElxB and the cyclase ElxC) follow at residues 44-47 (TLTC) and 46-49 (TCGC). Threonine 52 is modified (2,3-didehydrobutyrine; by the dehydratase ElxB).

In terms of processing, maturation of this lantibiotic involves the enzymatic conversion of Thr, and Ser into dehydrated AA by ElxB and the formation of thioether bonds with cysteine by the cyclase ElxC. The next steps are cleavage of the leader peptide by ElxP and membrane translocation by ElxT. The leader peptide may be removed before membrane translocation, in contrast to other lantibiotics for which the cleavage occur after translocation. This is suggested by the probable cytoplasmic localization of the serine protease ElxP that cleaves the leader peptide. Post-translationally, the N-terminal D-lactate is probably produced by dehydration of Ser-25 by ElxB, followed by proteolytic removal of the leader peptide by the serine protease ElxP and hydrolysis of the resulting new N-terminal dehydroalanine. This hydrolysis may occur spontaneously. The pyruvate group thus formed is reduced to D-lactate by the NADPH-dependent oxidoreductase ElxO. This N-terminal D-lactate protects the lantibiotic against degradation against aminopeptidase. It is not established whether the 2,3-didehydrobutyrines are the E- or Z-isomers.

Its function is as follows. Lanthionine-containing peptide antibiotic (lantibiotic) active on Gram-positive bacteria such as staphylococci, enterococci and streptococci. The bactericidal activity of lantibiotics is based on depolarization of energized bacterial cytoplasmic membranes, initiated by the formation of aqueous transmembrane pores. The sequence is that of Lantibiotic epilancin 15X from Staphylococcus epidermidis.